The following is a 483-amino-acid chain: MTTALEEQNAQQAATAGRVVRVIGAVVDVEFPRGELPALYNALTVEVTLESVKKTVVLEVAQHLGDNLIRTIAMAPTDGLVRGAAVTDTARPISVPVGDVVKGHVFNALGDCLDDVSLNNNPEIERWGIHREPPSFDQLEGKTEILETGIKVIDLLTPYVKGGKIGLFGGAGVGKTVLIQEMITRIAREFSGTSVFAGVGERTREGTDLFLEMEEMGVLQDTALVFGQMDEPPGVRMRVALSGLTMAEYFRDVQNQDVLLFIDNIFRFTQAGSEVSTLLGRMPSAVGYQPTLADEMGVLQERITSTKGRSITSLQAVYVPADDYTDPAPATTFAHLDATTELDRSIASKGIYPAVNPLTSTSRILEPAIVGERHYEVSQRVIGILQKNKELQDIIAILGMDELSEEDKITVARARRIERFLGQNFFVAEKFTGLPGSYVPLTDTVDAFERICNGDFDHYPDQAFNGLGGLDDVEAAYKKLTGK.

169-176 (GGAGVGKT) contacts ATP.

Belongs to the ATPase alpha/beta chains family. As to quaternary structure, F-type ATPases have 2 components, CF(1) - the catalytic core - and CF(0) - the membrane proton channel. CF(1) has five subunits: alpha(3), beta(3), gamma(1), delta(1), epsilon(1). CF(0) has three main subunits: a(1), b(2) and c(9-12). The alpha and beta chains form an alternating ring which encloses part of the gamma chain. CF(1) is attached to CF(0) by a central stalk formed by the gamma and epsilon chains, while a peripheral stalk is formed by the delta and b chains.

It localises to the cell membrane. The catalysed reaction is ATP + H2O + 4 H(+)(in) = ADP + phosphate + 5 H(+)(out). Its function is as follows. Produces ATP from ADP in the presence of a proton gradient across the membrane. The catalytic sites are hosted primarily by the beta subunits. The polypeptide is ATP synthase subunit beta (Corynebacterium glutamicum (strain ATCC 13032 / DSM 20300 / JCM 1318 / BCRC 11384 / CCUG 27702 / LMG 3730 / NBRC 12168 / NCIMB 10025 / NRRL B-2784 / 534)).